The sequence spans 767 residues: Ribonucleoside-diphosphate reductase large subunit (767 aa).

Substrate contacts are provided by residues Thr176, 191–192 (SC), Gly222, 392–396 (NLCAE), and 578–582 (PTAGT). Cys192 and Cys408 are joined by a disulfide. The active-site Proton acceptor is the Asn392. Cys394 serves as the catalytic Cysteine radical intermediate. The active-site Proton acceptor is the Glu396.

This sequence belongs to the ribonucleoside diphosphate reductase large chain family. As to quaternary structure, heterotetramer composed of a homodimer of the large subunit (R1) and a homodimer of the small subunit (R2). Larger multisubunit protein complex are also active, composed of (R1)n(R2)n.

It carries out the reaction a 2'-deoxyribonucleoside 5'-diphosphate + [thioredoxin]-disulfide + H2O = a ribonucleoside 5'-diphosphate + [thioredoxin]-dithiol. In terms of biological role, ribonucleoside-diphosphate reductase holoenzyme provides the precursors necessary for viral DNA synthesis. Allows virus growth in non-dividing cells, as well as reactivation from latency in infected hosts. Catalyzes the biosynthesis of deoxyribonucleotides from the corresponding ribonucleotides. The chain is Ribonucleoside-diphosphate reductase large subunit from Saimiri sciureus (Common squirrel monkey).